Consider the following 94-residue polypeptide: MICOS complex subunit MIC12 (94 aa).

A helical transmembrane segment spans residues 7 to 23 (YGSFSVVASVLGASYYY).

Belongs to the MICOS complex subunit Mic12 family. Component of the mitochondrial contact site and cristae organizing system (MICOS) complex.

The protein resides in the mitochondrion inner membrane. Component of the MICOS complex, a large protein complex of the mitochondrial inner membrane that plays crucial roles in the maintenance of crista junctions, inner membrane architecture, and formation of contact sites to the outer membrane. The sequence is that of MICOS complex subunit MIC12 (AIM5) from Eremothecium gossypii (strain ATCC 10895 / CBS 109.51 / FGSC 9923 / NRRL Y-1056) (Yeast).